A 2359-amino-acid polypeptide reads, in one-letter code: Nonribosomal peptide synthetase anaPS (2359 aa).

The interval 239–633 (RNATVHGDTL…VRRKDNQVKI (395 aa)) is adenylation 1. Residues 770 to 846 (AAQGKGEEAI…ELASAANLSN (77 aa)) form the Carrier 1 domain. Ser807 bears the O-(pantetheine 4'-phosphoryl)serine mark. The interval 883-1292 (EDIYPSTALQ…VGDLPRMSRQ (410 aa)) is condensation 1. The adenylation 2 stretch occupies residues 1321-1709 (LEYPNACAVS…GRKDSQIKIR (389 aa)). In terms of domain architecture, Carrier 2 spans 1842–1918 (APSNSVEQDL…AIANKIGVVS (77 aa)). Ser1879 carries the O-(pantetheine 4'-phosphoryl)serine modification. The condensation 2 stretch occupies residues 1936–2356 (LTPIQEFFFE…LVKCLEDLAS (421 aa)).

Belongs to the NRP synthetase family.

It catalyses the reaction anthranilate + L-tryptophan + 2 ATP = (R)-benzodiazepinedione + 2 AMP + 2 diphosphate + H(+). Its pathway is alkaloid biosynthesis. Its function is as follows. Nonribosomal peptide synthetase; part of the gene cluster that mediates the biosynthesis of the prenylated pyrroloindoline diketopiperazine acetylaszonalenin. The first step in the pathway is the formation of (R)-benzodiazepinedione by condensation of tryptophan and anthranilic acid catalyzed by the non-ribosomal peptide synthetase anaPS. The prenyltransferase anaPT then converts (R)-benzodiazepinedione to aszonalenin in the presence of dimethylallyl diphosphate (DMAPP) via C3-prenylation. The last step in the biosynthesis of acetylaszonalenin via acetylation of aszonalenin at position N1 catalyzed by anaAT. The protein is Nonribosomal peptide synthetase anaPS of Neosartorya fischeri (strain ATCC 1020 / DSM 3700 / CBS 544.65 / FGSC A1164 / JCM 1740 / NRRL 181 / WB 181) (Aspergillus fischerianus).